Here is a 186-residue protein sequence, read N- to C-terminus: ATP synthase subunit b, chloroplastic (186 aa).

A helical membrane pass occupies residues 27 to 49; that stretch reads LATNPINLSVVLGVLIFFGKGVL.

Belongs to the ATPase B chain family. As to quaternary structure, F-type ATPases have 2 components, F(1) - the catalytic core - and F(0) - the membrane proton channel. F(1) has five subunits: alpha(3), beta(3), gamma(1), delta(1), epsilon(1). F(0) has four main subunits: a(1), b(1), b'(1) and c(10-14). The alpha and beta chains form an alternating ring which encloses part of the gamma chain. F(1) is attached to F(0) by a central stalk formed by the gamma and epsilon chains, while a peripheral stalk is formed by the delta, b and b' chains.

Its subcellular location is the plastid. It localises to the chloroplast thylakoid membrane. Its function is as follows. F(1)F(0) ATP synthase produces ATP from ADP in the presence of a proton or sodium gradient. F-type ATPases consist of two structural domains, F(1) containing the extramembraneous catalytic core and F(0) containing the membrane proton channel, linked together by a central stalk and a peripheral stalk. During catalysis, ATP synthesis in the catalytic domain of F(1) is coupled via a rotary mechanism of the central stalk subunits to proton translocation. In terms of biological role, component of the F(0) channel, it forms part of the peripheral stalk, linking F(1) to F(0). This chain is ATP synthase subunit b, chloroplastic, found in Illicium oligandrum (Star anise).